A 427-amino-acid chain; its full sequence is Proteinase-activated receptor 1 (427 aa).

An N-terminal signal peptide occupies residues 1–21 (MGPRWLLLWAAGLGLCSPLVS). A propeptide spans 22–41 (ARTRGPRPGTDPTNGTLGPR) (removed for receptor activation). Residues 23-87 (RTRGPRPGTD…RSSPPQKSPP (65 aa)) are disordered. Asparagine 35 carries an N-linked (GlcNAc...) asparagine glycan. Over 42–104 (SFFLRNSNDG…SGYLTSAWLT (63 aa)) the chain is Extracellular. The span at 58 to 68 (PEDEDSSEGEF) shows a compositional bias: acidic residues. Asparagine 77 carries N-linked (GlcNAc...) asparagine glycosylation. The chain crosses the membrane as a helical span at residues 105–130 (VFIPSVYTGVFLVSLPLNIMAVVVFV). Residues 131 to 139 (LKMKVKKPA) lie on the Cytoplasmic side of the membrane. Residues 140–159 (VVYMLHLAAADVLFVCVLPF) traverse the membrane as a helical segment. Over 160 to 178 (KISYYFSGSDWRFGSAMCR) the chain is Extracellular. A disulfide bridge connects residues cysteine 177 and cysteine 256. Residues 179 to 200 (FVTAAFYGNMYASIMLMTAISV) form a helical membrane-spanning segment. The Cytoplasmic portion of the chain corresponds to 201–220 (DRFLAVVYPIQSLSWRTLGR). A helical membrane pass occupies residues 221-241 (ASFICLAIWAMAIAGVAPLLL). Residues 242-270 (QEQATQVPGLNITACHDVLNQTLLEGYYS) are Extracellular-facing. 2 N-linked (GlcNAc...) asparagine glycosylation sites follow: asparagine 252 and asparagine 261. The helical transmembrane segment at 271 to 290 (YYFSAFSAVFFFVPLTLSTV) threads the bilayer. Topologically, residues 291–313 (SYVSIIRCLSSSTVANQNKKSRA) are cytoplasmic. The helical transmembrane segment at 314–336 (LLLSAAVFCIFILCFGPTNILLL) threads the bilayer. At 337 to 351 (LHYAFLSSDPMTEAA) the chain is on the extracellular side. A helical transmembrane segment spans residues 352-376 (YFAYLLCVCVSSISCCIDPLIYYYA). Residues 377 to 427 (SSECQRHLFAILHCKESSDPGSCNSSGQLMPSKMDTCSSNLSSSLYKKLLT) lie on the Cytoplasmic side of the membrane. Serine 420 is modified (phosphoserine).

It belongs to the G-protein coupled receptor 1 family. Proteolytic cleavage by thrombin generates a new N-terminus that functions as a tethered ligand. Also proteolytically cleaved by cathepsin CTSG. In terms of processing, phosphorylated in the C-terminal tail; probably mediating desensitization prior to the uncoupling and internalization of the receptor.

The protein localises to the cell membrane. In terms of biological role, high affinity receptor that binds the activated thrombin, leading to calcium release from intracellular stores. The thrombin-activated receptor signaling pathway is mediated through PTX-insensitive G proteins, activation of phospholipase C resulting in the production of 1D-myo-inositol 1,4,5-trisphosphate (InsP3) which binds to InsP3 receptors causing calcium release from the stores. In astrocytes, the calcium released into the cytosol allows the Ca(2+)-dependent release of L-glutamate into the synaptic cleft through BEST1, that targets the neuronal postsynaptic GRIN2A/NMDAR receptor resulting in the synaptic plasticity regulation. May play a role in platelets activation and in vascular development. Mediates up-regulation of pro-inflammatory cytokines, such as MCP-1/CCL2 and IL6, triggered by coagulation factor Xa (F10) in cardiac fibroblasts and umbilical vein endothelial cells. The protein is Proteinase-activated receptor 1 of Bos taurus (Bovine).